A 119-amino-acid polypeptide reads, in one-letter code: Beta-2-microglobulin (119 aa).

The signal sequence occupies residues 1–20; that stretch reads MARLVVVALLVLLCLSGLEA. The Ig-like C1-type domain occupies 25-114; sequence PKIQVYSRHP…VTFTAPKTVK (90 aa). C45 and C100 are oxidised to a cystine.

It belongs to the beta-2-microglobulin family. Heterodimer of an alpha chain and a beta chain. Beta-2-microglobulin is the beta-chain of major histocompatibility complex class I molecules.

It is found in the secreted. In terms of biological role, component of the class I major histocompatibility complex (MHC). Involved in the presentation of peptide antigens to the immune system. This chain is Beta-2-microglobulin (B2M), found in Chiropotes satanas (Brown-bearded saki).